A 333-amino-acid chain; its full sequence is Secreted mono- and diacylglycerol lipase 1 (333 aa).

Positions 1–16 are cleaved as a signal peptide; sequence MMLILSILSIIAFAAA. Disulfide bonds link Cys-56–Cys-268 and Cys-276–Cys-298. The active-site Nucleophile is the Ser-176. Residues Asp-230 and His-288 contribute to the active site.

It belongs to the AB hydrolase superfamily. Lipase family. Class 3 subfamily.

The protein localises to the secreted. The enzyme catalyses a monoacylglycerol + H2O = glycerol + a fatty acid + H(+). It catalyses the reaction a diacylglycerol + H2O = a monoacylglycerol + a fatty acid + H(+). Its function is as follows. Secreted mono- and diacylglycerol lipase that allows the use of hydrolyzed lipids as carbon source and might play a role in pathogenicity. Shows lipolytic activity towards olive oil and p-nitrophenylpalmitate. The sequence is that of Secreted mono- and diacylglycerol lipase 1 from Fusarium solani (Filamentous fungus).